The chain runs to 153 residues: Aspartate carbamoyltransferase regulatory chain (153 aa).

Zn(2+)-binding residues include C109, C114, C138, and C141.

The protein belongs to the PyrI family. In terms of assembly, contains catalytic and regulatory chains. Zn(2+) is required as a cofactor.

Its function is as follows. Involved in allosteric regulation of aspartate carbamoyltransferase. This is Aspartate carbamoyltransferase regulatory chain from Escherichia coli O7:K1 (strain IAI39 / ExPEC).